Consider the following 409-residue polypeptide: Putative kinase Y4dM (409 aa).

The active-site Proton acceptor is aspartate 293.

The protein belongs to the HipA Ser/Thr kinase family.

The chain is Putative kinase Y4dM from Sinorhizobium fredii (strain NBRC 101917 / NGR234).